The following is a 161-amino-acid chain: MKKIEISGTCLSFHLLFGLEIRMRRIVFAGVILFRLLGVILFRLLGVILFGRLGDLGTCQTKPGQYWKEEVHIQDVGGLICRACNLSLPFHGCLLDLGTCQAEPGQYCKEEVHIQGGIQWYSVKGCTKNTSECFKSTLVKRILQLHELVTTHCCNHSLCNF.

A helical transmembrane segment spans residues 30–50; it reads GVILFRLLGVILFRLLGVILF.

Its subcellular location is the membrane. This is an uncharacterized protein from Homo sapiens (Human).